Consider the following 277-residue polypeptide: MNSENASLFRNILNDTENLVQPLTQDESRLALFESLVQSDQLLVEKIEKWEKKVSKFTENSKSEKRKLQLELFQEIIDLKKCIAFKPIIGKNAIDNNISDLKKNLHSNKKLEAVLKEELHQIKKFSSDLQSLKSSMGERQKQQAAMSRRGKKSIIHSAIIQEKERYEKESQELFTFLDGFLDEHAPSLLEGAQASIDKNRPGKNQPSLNFENISKKDLTEEFKQVIENLMNNSIIPGSPYIEVKNERIVSFLVLASLCTVDPQDPSKVKLIPFSDEI.

Positions N96–E138 form a coiled coil.

It belongs to the CENP-K/MCM22 family. Component of the inner kinetochore constitutive centromere-associated network (CCAN) (also known as central kinetochore Sim4 complex in fission yeast), which is composed of at least cnl2, cnp3, cnp20, fta1, fta2, fta3, fta4, fta6, fta7, mal2, mhf1, mhf2, mis6, mis15, mis17, sim4 and wip1. Interacts with mis6 and dad1.

The protein localises to the nucleus. It localises to the chromosome. Its subcellular location is the centromere. Functionally, component of the kinetochore, a multiprotein complex that assembles on centromeric DNA and attaches chromosomes to spindle microtubules, mediating chromosome segregation and sister chromatid segregation during meiosis and mitosis. Component of the inner kinetochore constitutive centromere-associated network (CCAN), which serves as a structural platform for outer kinetochore assembly. This chain is Inner kinetochore subunit sim4 (sim4), found in Schizosaccharomyces pombe (strain 972 / ATCC 24843) (Fission yeast).